A 742-amino-acid chain; its full sequence is F-box only protein 30 (742 aa).

The TRAF-type zinc-finger motif lies at 49–108; it reads EHRLLCPFERVPCLNSNFGCPFTLARNKVAEHLEMCPASVVCCTMEWNRWPVSYSDRKSY. Positions 214–242 are disordered; the sequence is SLQGTTNEMDEESNRESSQDRNAKDQDHL. Basic and acidic residues predominate over residues 225–242; the sequence is ESNRESSQDRNAKDQDHL. The residue at position 379 (S379) is a Phosphoserine. The 47-residue stretch at 607–653 folds into the F-box domain; sequence SDHLSSLPFEVLQHIAGFLDGFSLCQLACVSRLMRDICGSLLQSRGM.

In terms of assembly, part of a SCF (SKP1-cullin-F-box) protein ligase complex. Interacts with SKP1, CUL1 and RBX1/ROC1. In terms of processing, auto-ubiquitinated. May be neddylated. Neddylation may be required for E3 ligase activity.

It functions in the pathway protein modification; protein ubiquitination. Substrate-recognition component of the SCF (SKP1-CUL1-F-box protein)-type E3 ubiquitin ligase complex. Required for muscle atrophy following denervation. The protein is F-box only protein 30 (Fbxo30) of Rattus norvegicus (Rat).